The following is a 480-amino-acid chain: Ciliated left-right organizer protein containing ZP-N domains homolog (480 aa).

Positions 1-23 (MKNQHNTFWVLCLLFVMFDETFS) are cleaved as a signal peptide.

As to expression, expressed specifically by cells of the ciliated left-right organizer.

The protein localises to the secreted. This chain is Ciliated left-right organizer protein containing ZP-N domains homolog, found in Xenopus tropicalis (Western clawed frog).